The primary structure comprises 266 residues: 22 kDa alpha-zein 8 (266 aa).

The signal sequence occupies residues 1–21 (MATKILALLALLALFVSATNA).

This sequence belongs to the zein family.

Functionally, zeins are major seed storage proteins. The protein is 22 kDa alpha-zein 8 of Zea mays (Maize).